A 186-amino-acid chain; its full sequence is ADP-ribosylation factor-like protein 8A (186 aa).

An intramembrane region (note=Mediates targeting to membranes) is located at residues 1-19 (MLALFNKLLDWFRALFWKE). Residues 29 to 35 (QYSGKTT), 71 to 75 (DIGGQ), and 130 to 133 (NKRD) each bind GTP.

This sequence belongs to the small GTPase superfamily. Arf family.

The protein resides in the late endosome membrane. It is found in the lysosome membrane. Its subcellular location is the cytoplasm. It localises to the cytoskeleton. The protein localises to the spindle. The protein resides in the cell projection. It is found in the axon. Its subcellular location is the synapse. Functionally, plays a role in lysosome motility. In neurons, mediates the anterograde axonal long-range transport of presynaptic lysosome-related vesicles required for presynaptic biogenesis and synaptic function. May play a role in chromosome segregation. The protein is ADP-ribosylation factor-like protein 8A (ARL8A) of Gallus gallus (Chicken).